The following is a 652-amino-acid chain: MALVTVSRSPPASGHSTPVGPTDRVIRRRGRLQRRQSFAVLRGAVLGLQDGGEGNDAAEADPEPMEKPSGEEQPAEDQTDNGQGSQSPWKQVQKRHLHLMVELLRPQDDIRLAAQLEAARPPRLRYLLVVSTGEGLSEEETILLGVDFPDSSSHSCTLGLVLPLWSDTQVYLDGDGGFSVTSGGQSRIFKPVSIQTMWATLQVLHQACEVALGSGLVPGGSALAWATHYQEKLNSDQGCLNEWMAMSDLESFRPPNAEPGQASEQEQMEQAILAELWQVLDASDLDSVTSKEIRQALELRLGCPLQQYRDFIDNQMLLLMAQQDRASRIFPHLYLGSEWNAANLEELQRNRVSHILNMAREIDNFFPERFTYHNVRVWDEESAQLLPHWKETHRFIEDARAQGTRVLVHCKMGVSRSAATVLAYAMKQYGWGLEQALIHVQELRPIVRPNPGFLRQLQTYQGILTASRQSHVWEQKVGVVSPEEPLAPEVSTPLPPLPPEPGGSGEGMVMGQKGSQETPKEELGLRPRINLRGVMRSISLLEPSSEPESTTEAGDLPEVFSSDEEPLHPFSQLSRAKGGQRVCKGPWPALKSRQSVVALHSAALVASRARAFQGQGQGQGQEQRETGTSSTPRLRKVIRQASVDDSREEGKA.

The span at 1–16 shows a compositional bias: polar residues; the sequence is MALVTVSRSPPASGHS. The tract at residues 1 to 31 is disordered; it reads MALVTVSRSPPASGHSTPVGPTDRVIRRRGR. Alanine 2 is modified (N-acetylalanine). Serine 9, serine 37, serine 85, and serine 87 each carry phosphoserine. A disordered region spans residues 43 to 91; sequence GAVLGLQDGGEGNDAAEADPEPMEKPSGEEQPAEDQTDNGQGSQSPWKQ. Positions 80-90 are enriched in polar residues; sequence DNGQGSQSPWK. Positions 266–321 constitute a DEK-C domain; the sequence is EQMEQAILAELWQVLDASDLDSVTSKEIRQALELRLGCPLQQYRDFIDNQMLLLMA. The 142-residue stretch at 325-466 folds into the Tyrosine-protein phosphatase domain; it reads RASRIFPHLY…LQTYQGILTA (142 aa). The active-site Phosphocysteine intermediate is cysteine 410. Disordered stretches follow at residues 484–526, 540–580, and 610–652; these read EPLA…LGLR, LLEP…KGGQ, and RAFQ…EGKA. Residues 540 to 552 are compositionally biased toward low complexity; that stretch reads LLEPSSEPESTTE. Over residues 642–652 the composition is skewed to basic and acidic residues; it reads SVDDSREEGKA.

It belongs to the protein-tyrosine phosphatase family. Does not bind to, or colocalize with, filamentous actin.

Its subcellular location is the cytoplasm. It is found in the cytoskeleton. The protein resides in the nucleus. The enzyme catalyses O-phospho-L-tyrosyl-[protein] + H2O = L-tyrosyl-[protein] + phosphate. The catalysed reaction is O-phospho-L-seryl-[protein] + H2O = L-seryl-[protein] + phosphate. It catalyses the reaction O-phospho-L-threonyl-[protein] + H2O = L-threonyl-[protein] + phosphate. Protein phosphatase which may play a role in the regulation of actin filament dynamics. Can dephosphorylate and activate the actin binding/depolymerizing factor cofilin, which subsequently binds to actin filaments and stimulates their disassembly. This is Protein phosphatase Slingshot homolog 3 (Ssh3) from Rattus norvegicus (Rat).